The following is a 1507-amino-acid chain: Transient receptor potential cation channel subfamily M member 2 (1507 aa).

Over residues 1–11 (MEPLDQRRTDS) the composition is skewed to basic and acidic residues. The tract at residues 1–24 (MEPLDQRRTDSDQEEGFGVQSRRA) is disordered. At 1–751 (MEPLDQRRTD…WWGQLCVDNG (751 aa)) the chain is on the cytoplasmic side. Positions 173, 178, 301, 332, and 335 each coordinate ADP-D-ribose. A Phosphothreonine modification is found at Thr739. The stretch at 752 to 768 (LWRIILCMLAFPLLFTG) is an intramembrane region. The Cytoplasmic segment spans residues 769–793 (FISFREKRLQALCRLARVRAFFNAP). A helical membrane pass occupies residues 794–814 (VVIFYLNILSYFAFLCLFAYV). The Extracellular portion of the chain corresponds to 815–825 (LMVDFQPSPSW). Residues 826–846 (CEYLIYLWLFSLVCEETRQLF) traverse the membrane as a helical segment. Ca(2+) is bound by residues Glu841 and Gln844. At 847–865 (YDPDGCGLMKMASLYFSDF) the chain is on the cytoplasmic side. Residues 866-886 (WNKLDVGAILLFIAGLTCRLI) form a helical membrane-spanning segment. Asn867 serves as a coordination point for Ca(2+). Residues 887-894 (PATLYPGR) are Extracellular-facing. The helical transmembrane segment at 895–915 (IILSLDFIMFCLRLMHIFTIS) threads the bilayer. The Cytoplasmic segment spans residues 916-927 (KTLGPKIIIVKR). Residues 928–948 (MMKDVFFFLFLLAVWVVSFGV) traverse the membrane as a helical segment. Over 949 to 968 (AKQAILIHNESRVDWIFRGV) the chain is Extracellular. The pore-forming intramembrane region spans 969–983 (IYHSYLTIFGQIPTY). Residues 977–980 (FGQI) carry the Selectivity filter motif. The Extracellular segment spans residues 984–1020 (IDGVNFSMDQCSPNGTDPYKPKCPESDWTGQAPAFPE). An intrachain disulfide couples Cys994 to Cys1006. Residues 1021–1042 (WLTVTLLCLYLLFANILLLNLL) traverse the membrane as a helical segment. At 1043 to 1077 (IAMFNYTFQEVQEHTDQIWKFQRHDLIEEYHGRPP) the chain is on the cytoplasmic side. Glu1071 provides a ligand contact to Ca(2+). An intramembrane segment occupies 1078–1096 (APPPLILLSHLQLLIKRIV). Over 1097–1507 (LKIPAKRHKQ…KVASLFGAHF (411 aa)) the chain is Cytoplasmic. Residues 1351 to 1502 (RWKRNQGGGI…KKILQKVASL (152 aa)) form the Nudix hydrolase domain. Position 1379 (Ser1379) interacts with ADP-D-ribose. Positions 1387 to 1408 (GSREPGKMLPRKLKQVLQQEYW) match the Nudix box motif. The ADP-D-ribose site is built by Asp1428, Arg1430, Tyr1489, and Asn1491.

The protein belongs to the transient receptor (TC 1.A.4) family. LTrpC subfamily. TRPM2 sub-subfamily. Homotetramer. In terms of processing, phosphorylation of TRPM2 at Thr-739 by protein kinase C (PKC) counteracts the effect of cytosolic Ca(2+) and elevates the temperature threshold. In terms of tissue distribution, detected in pancreas beta-cells. Detected in fetal brain cortex neurons (at protein level).

Its subcellular location is the cell membrane. It is found in the perikaryon. The protein resides in the cell projection. The protein localises to the cytoplasmic vesicle. It localises to the lysosome. It carries out the reaction Ca(2+)(in) = Ca(2+)(out). It catalyses the reaction Na(+)(in) = Na(+)(out). Activated by intracellular ADP-ribose, beta-NAD (NAD(+)) and similar compounds, and by oxidative stress caused by reactive oxygen or nitrogen species. Ca(2+) and PI(4,5)P2 are required for channel opening by ADP-ribose. Activation by ADP-ribose and beta-NAD is strongly increased by moderate heat (35 to 40 degrees Celsius). Likewise, reactive oxygen species lower the threshold for activation by moderate heat (37 degrees Celsius). Activated by moderate heat (35 to 40 degrees Celsius). Inactivated by exposure to extracellular pH between 4.0 and 6.5; irreversibly inactivated when open channels are exposed to extracellular pH between 4.0 and 6.5, while pre-exposure of closed channels to extracellular pH 5.5 gives rise to currents that rapidly inactivate, but protects against irreversible inactivation. Inactivated by intracellular ATP. Activated by arachidonic acid. Inhibited by 2-aminoethyl diphenylborinate (2-APB). Functionally, nonselective, voltage-independent cation channel that mediates Na(+) and Ca(2+) influx, leading to increased cytoplasmic Ca(2+) levels. Functions as a ligand-gated ion channel gated by intracellular adenosine diphosphate ribose (ADP-ribose), Ca(2+), warm temperature, and oxidative stress. The precise physiological activators are under debate; the true, physiological activators may be ADP-ribose and ADP-ribose-2'-phosphate. Binding of ADP-ribose to the cytoplasmic Nudix domain causes a conformation change; the channel is primed but still requires Ca(2+) binding to trigger channel opening. Extracellular Ca(2+) passes through the channel and increases channel activity. Also contributes to Ca(2+) release from intracellular stores in response to ADP-ribose. Plays a role in numerous processes that involve signaling via intracellular Ca(2+) levels. Besides, mediates the release of lysosomal Zn(2+) stores in response to reactive oxygen species, leading to increased cytosolic Zn(2+) levels. Plays a role in insulin secretion, a process that requires increased cytoplasmic Ca(2+) levels. Required for normal IFNG and cytokine secretion and normal innate immune immunity in response to bacterial infection. Required for normal phagocytosis and cytokine release by macrophages exposed to zymosan (in vitro). Plays a role in dendritic cell differentiation and maturation, and in dendritic cell chemotaxis via its role in regulating cytoplasmic Ca(2+) levels. Plays a role in the regulation of the reorganization of the actin cytoskeleton and filopodia formation in response to reactive oxygen species via its function in increasing cytoplasmic Ca(2+) and Zn(2+) levels. Confers susceptibility to cell death following oxidative stress. In Rattus norvegicus (Rat), this protein is Transient receptor potential cation channel subfamily M member 2.